A 637-amino-acid chain; its full sequence is MNNQGRSILAWAALFIFVILLFNVFQSDGLLGVRNNITFSDFLTRVDERTINSVKIQGRVIEGTSNDGSTFSTYSPDYPDLVNRLTSNDVNIEVVPLETRMNTFLGFLISWFPMLLLIGVWVFFMRQMHGGGKAMGFGKSKARLLSDKGPKITFKDVAGIDEAKEELTEIVDFLRDPSKFQKLGGKIPKGCLLIGPPGTGKTLLAKAIAGEANVPFFSISGSDFVEMFVGVGASRVRDMFEQGKRNAPCIIFIDEIDAVGRHRGIGMGGGNDEREQTLNQMLVEMDGFEANEGVVIIAATNRPDVLDRALLRPGRFDRQIAVANPDINGREQILKVHLKKIKYNSTVLARIIARGTPGFSGAELANLVNEAALIAARLGKKEVDMHDMEEAKDKVLMGVVRRSIAMSEKEKRLTAYHEGGHALVGLYCPAASPIHKATIIPRGNALGMVQRLPETDEYSQNREQMESSIAVYMAGRVAEEIIFGKNKVTSGAASDIKGATNIARAMVTKAGLSDLIGPIFHGSSSDDMYGRQQSNEISEATAKLIDAEVKKIITQGYEFAKDILTKHIDQLHTLANALIEYETLSGQQIKNLLSGRALDSEEENKFPFNDAHTIKIDKEKLHEKTKTTKAQKENIAS.

Topologically, residues 1 to 6 (MNNQGR) are cytoplasmic. A helical membrane pass occupies residues 7 to 27 (SILAWAALFIFVILLFNVFQS). At 28–103 (DGLLGVRNNI…VVPLETRMNT (76 aa)) the chain is on the periplasmic side. Residues 104–124 (FLGFLISWFPMLLLIGVWVFF) form a helical membrane-spanning segment. The Cytoplasmic portion of the chain corresponds to 125–637 (MRQMHGGGKA…TKAQKENIAS (513 aa)). An ATP-binding site is contributed by 195-202 (GPPGTGKT). Histidine 417 serves as a coordination point for Zn(2+). The active site involves glutamate 418. The Zn(2+) site is built by histidine 421 and aspartate 495. The interval 617–637 (DKEKLHEKTKTTKAQKENIAS) is disordered.

In the central section; belongs to the AAA ATPase family. This sequence in the C-terminal section; belongs to the peptidase M41 family. Homohexamer. It depends on Zn(2+) as a cofactor.

It is found in the cell inner membrane. Acts as a processive, ATP-dependent zinc metallopeptidase for both cytoplasmic and membrane proteins. Plays a role in the quality control of integral membrane proteins. In Rickettsia typhi (strain ATCC VR-144 / Wilmington), this protein is ATP-dependent zinc metalloprotease FtsH.